The sequence spans 87 residues: Defensin-like protein 223 (87 aa).

The first 34 residues, M1 to I34, serve as a signal peptide directing secretion. Disulfide bonds link C55–C72, C58–C77, and C62–C79.

Belongs to the DEFL family.

Its subcellular location is the secreted. The polypeptide is Defensin-like protein 223 (Arabidopsis thaliana (Mouse-ear cress)).